The following is a 965-amino-acid chain: 26S proteasome regulatory subunit rpn2 (965 aa).

10 PC repeats span residues 385–418 (TATA…PSSS), 424–457 (GAFY…EIVQ), 459–493 (GLLL…VAGS), 494–528 (AAGI…EKII), 530–563 (GLGI…TLRY), 564–599 (AGMF…DVRR), 600–632 (AAVC…PHVR), 634–668 (GSAI…FVRQ), 669–699 (GAMI…FEQV), and 712–744 (GATL…SAIV). Disordered stretches follow at residues 826-883 (AKRA…KSET) and 934-965 (NRDA…DDDD). Composition is skewed to basic and acidic residues over residues 827–856 (KRAE…KEAT) and 874–883 (SKKEEPKSET). Positions 945 to 965 (EPGEQEASPPEDFEYPFDDDD) are enriched in acidic residues. The residue at position 952 (S952) is a Phosphoserine.

Belongs to the proteasome subunit S1 family.

Its function is as follows. Acts as a regulatory subunit of the 26S proteasome which is involved in the ATP-dependent degradation of ubiquitinated proteins. The protein is 26S proteasome regulatory subunit rpn2 (rpn2) of Schizosaccharomyces pombe (strain 972 / ATCC 24843) (Fission yeast).